We begin with the raw amino-acid sequence, 247 residues long: Epidermal cell differentiation inhibitor (247 aa).

A signal peptide spans 1–35 (MKNKLLFKIFLSLSLALSVYSINDKIIEVSNTSLA). One can recognise a TR mART core domain in the interval 39–247 (KNFTDLDEAT…IIITAIVFKK (209 aa)). Residues arginine 120, serine 173, and glutamate 215 contribute to the active site.

It to ADP-ribosyltransferase C3 of Clostridium.

Its function is as follows. Inhibits terminal differentiation of cultured mouse keratinocytes. In culture, also inhibits the differentiation of human keratinocytes. Probable ADP-ribosyltransferase. The sequence is that of Epidermal cell differentiation inhibitor from Staphylococcus aureus.